A 213-amino-acid chain; its full sequence is Ion-translocating oxidoreductase complex subunit E (213 aa).

Helical transmembrane passes span 25-45, 46-66, 77-97, 100-120, 135-155, and 181-201; these read TFGL…VENG, IGMA…VSAI, PVEI…MEAF, DLYT…IVIG, IIDA…IGGI, and AMFM…MTIV.

Belongs to the NqrDE/RnfAE family. As to quaternary structure, the Rnf complex is probably composed of eight subunits, including RnfA, RnfB, RnfC, RnfD, RnfE and RnfG.

The protein resides in the cell membrane. Part of a membrane-bound complex that couples electron transfer with translocation of ions across the membrane. Catalyzes Na(+) transport, most probably coupled to electron transfer from reduced ferredoxin to methanophenazine and heterodisulfide reductase. Involved in heterodisulfide reduction during methanogenesis from acetate. This is Ion-translocating oxidoreductase complex subunit E from Methanosarcina acetivorans (strain ATCC 35395 / DSM 2834 / JCM 12185 / C2A).